We begin with the raw amino-acid sequence, 1838 residues long: Nuclear pore complex protein NUP205 (1838 aa).

It belongs to the NUP186/NUP192/NUP205 family. Part of the nuclear pore complex (NPC). The NPC has an eight-fold symmetrical structure comprising a central transport channel and two rings, the cytoplasmic and nuclear rings, to which eight filaments are attached. The cytoplasmic filaments have loose ends, while the nuclear filaments are joined in a distal ring, forming a nuclear basket. NPCs are highly dynamic in configuration and composition, and can be devided in 3 subcomplexes, the NUP62 subcomplex, the NUP107-160 subcomplex and the NUP93 subcomplex, containing approximately 30 different nucleoporin proteins.

The protein resides in the nucleus envelope. It localises to the nucleus. The protein localises to the nuclear pore complex. The sequence is that of Nuclear pore complex protein NUP205 from Arabidopsis thaliana (Mouse-ear cress).